Reading from the N-terminus, the 466-residue chain is Uronate isomerase (466 aa).

Belongs to the metallo-dependent hydrolases superfamily. Uronate isomerase family.

The enzyme catalyses D-glucuronate = D-fructuronate. It carries out the reaction aldehydo-D-galacturonate = keto-D-tagaturonate. It participates in carbohydrate metabolism; pentose and glucuronate interconversion. The chain is Uronate isomerase from Streptococcus pneumoniae (strain 70585).